We begin with the raw amino-acid sequence, 88 residues long: Small ribosomal subunit protein bS20 (88 aa).

Residues 1 to 27 (MANSKSAKKRALQSEKRRQHNASRRSM) are disordered.

It belongs to the bacterial ribosomal protein bS20 family.

Functionally, binds directly to 16S ribosomal RNA. This is Small ribosomal subunit protein bS20 from Shewanella putrefaciens (strain CN-32 / ATCC BAA-453).